A 537-amino-acid chain; its full sequence is Phosphoenolpyruvate carboxykinase (ATP) (537 aa).

Arg-61, Tyr-195, and Lys-201 together coordinate substrate. ATP is bound by residues Lys-201, His-220, and Gly-236–Thr-244. Mn(2+) is bound by residues Lys-201 and His-220. Asp-257 contributes to the Mn(2+) binding site. Glu-285 serves as a coordination point for ATP. A compositionally biased stretch (basic and acidic residues) spans Asp-312 to Asn-321. A disordered region spans residues Asp-312–Arg-339. Arg-323 contributes to the substrate binding site. ATP-binding residues include Arg-323 and Thr-448.

The protein belongs to the phosphoenolpyruvate carboxykinase (ATP) family. Mn(2+) is required as a cofactor.

It is found in the cytoplasm. The enzyme catalyses oxaloacetate + ATP = phosphoenolpyruvate + ADP + CO2. Its pathway is carbohydrate biosynthesis; gluconeogenesis. Functionally, involved in the gluconeogenesis. Catalyzes the conversion of oxaloacetate (OAA) to phosphoenolpyruvate (PEP) through direct phosphoryl transfer between the nucleoside triphosphate and OAA. The polypeptide is Phosphoenolpyruvate carboxykinase (ATP) (Rhodopseudomonas palustris (strain BisB18)).